The chain runs to 460 residues: MKKIKTYENKNILILGLGKSGFSVAKLLLKLGAKLTLNDKKDLSNDDRAAELGKLGVRVISGYHPVEIFDEEKFDYLVKNPGIPYENPMVEKAEKLDIPVITEPEIALNVSEAPYVCVTGSNGKTTTVMLTQRIMDHNLSKNGGHAYAVGNIGVPISEVVEKATSKDLLVVEMSSFQLLGVTDIKPKVAAIVDIYNNVHLDYHKTFDNYVEAKLRITQSQDQDDYFIANFDQKNILEKELDKTKAKVQTFSETDKTADYFIGDEYLESKDDHHIMKISDIKIPGIHNQQNCLVAIAISKLMGADDSDIQYALSTFTGATHRLQYVMTYNDRKIYNDSKSTNIEAATVAIPSFKEPEVLIAGGLDRGFMFDSLVPLFKKHVKSIVLYGETKYLLADAARKAGIKDIVIVNTLQEAVPRAYELSEAGDVILFSPACASWDQFNTFEERGDFFVKFIKELKTK.

120–126 (GSNGKTT) is an ATP binding site.

The protein belongs to the MurCDEF family.

Its subcellular location is the cytoplasm. It carries out the reaction UDP-N-acetyl-alpha-D-muramoyl-L-alanine + D-glutamate + ATP = UDP-N-acetyl-alpha-D-muramoyl-L-alanyl-D-glutamate + ADP + phosphate + H(+). The protein operates within cell wall biogenesis; peptidoglycan biosynthesis. Cell wall formation. Catalyzes the addition of glutamate to the nucleotide precursor UDP-N-acetylmuramoyl-L-alanine (UMA). This Lactobacillus johnsonii (strain CNCM I-12250 / La1 / NCC 533) protein is UDP-N-acetylmuramoylalanine--D-glutamate ligase.